The chain runs to 571 residues: Membrane protein insertase YidC (571 aa).

Residues 4-24 (TRVFLIFAWLMVAVLLWMEWS) traverse the membrane as a helical segment. Residues 29–76 (APTPAPTTTSAPAAAQSVPGATPGSVPNAQVPGAPGQAAVQAQASATP) form a disordered region. Composition is skewed to low complexity over residues 34–43 (PTTTSAPAAA) and 57–76 (AQVP…SATP). 4 helical membrane passes run 369-389 (LVGN…LVLY), 440-460 (GGCL…WVLV), 483-503 (YFIL…LTPA), and 518-538 (PLVF…YWVV).

Belongs to the OXA1/ALB3/YidC family. Type 1 subfamily. Interacts with the Sec translocase complex via SecD. Specifically interacts with transmembrane segments of nascent integral membrane proteins during membrane integration.

The protein localises to the cell inner membrane. In terms of biological role, required for the insertion and/or proper folding and/or complex formation of integral membrane proteins into the membrane. Involved in integration of membrane proteins that insert both dependently and independently of the Sec translocase complex, as well as at least some lipoproteins. Aids folding of multispanning membrane proteins. The chain is Membrane protein insertase YidC from Stenotrophomonas maltophilia (strain R551-3).